The following is a 359-amino-acid chain: Glycerol-1-phosphate dehydrogenase [NAD(P)+] (359 aa).

Residues 107-111 (GRVID) and 129-132 (TAAS) each bind NAD(+). Asp134 is a binding site for substrate. Ser138 is an NAD(+) binding site. Asp181 contributes to the substrate binding site. Positions 181 and 261 each coordinate Zn(2+). Position 265 (His265) interacts with substrate. Residue His277 participates in Zn(2+) binding.

Belongs to the glycerol-1-phosphate dehydrogenase family. It depends on Zn(2+) as a cofactor.

The protein resides in the cytoplasm. It catalyses the reaction sn-glycerol 1-phosphate + NAD(+) = dihydroxyacetone phosphate + NADH + H(+). The enzyme catalyses sn-glycerol 1-phosphate + NADP(+) = dihydroxyacetone phosphate + NADPH + H(+). It functions in the pathway membrane lipid metabolism; glycerophospholipid metabolism. Functionally, catalyzes the NAD(P)H-dependent reduction of dihydroxyacetonephosphate (DHAP or glycerone phosphate) to glycerol 1-phosphate (G1P). The G1P thus generated is used as the glycerophosphate backbone of phospholipids in the cellular membranes of Archaea. The protein is Glycerol-1-phosphate dehydrogenase [NAD(P)+] of Methanosphaerula palustris (strain ATCC BAA-1556 / DSM 19958 / E1-9c).